We begin with the raw amino-acid sequence, 237 residues long: Phosphoribosylaminoimidazole-succinocarboxamide synthase (237 aa).

It belongs to the SAICAR synthetase family.

The catalysed reaction is 5-amino-1-(5-phospho-D-ribosyl)imidazole-4-carboxylate + L-aspartate + ATP = (2S)-2-[5-amino-1-(5-phospho-beta-D-ribosyl)imidazole-4-carboxamido]succinate + ADP + phosphate + 2 H(+). The protein operates within purine metabolism; IMP biosynthesis via de novo pathway; 5-amino-1-(5-phospho-D-ribosyl)imidazole-4-carboxamide from 5-amino-1-(5-phospho-D-ribosyl)imidazole-4-carboxylate: step 1/2. The chain is Phosphoribosylaminoimidazole-succinocarboxamide synthase from Edwardsiella ictaluri (strain 93-146).